The primary structure comprises 409 residues: Effector protein BipC (409 aa).

Disordered stretches follow at residues 268-287 (RETG…RMSD) and 330-396 (SGGQ…VAND). Positions 360–369 (AQQTAMAAAS) are enriched in low complexity. A compositionally biased stretch (basic and acidic residues) spans 370 to 382 (ARDEAAHRGRDAA).

The protein belongs to the SctB/SipC family.

The protein resides in the secreted. This is Effector protein BipC (bipC) from Burkholderia thailandensis (strain ATCC 700388 / DSM 13276 / CCUG 48851 / CIP 106301 / E264).